A 466-amino-acid chain; its full sequence is Uridine kinase-like protein 3 (466 aa).

The interval 41-246 (HGQPFVIGVA…IVQHIHTKLG (206 aa)) is uridine kinase. The tract at residues 256–466 (NLYVIQSTFQ…GDRYFGTDDE (211 aa)) is uracil phosphoribosyltransferase. Residues lysine 280, arginine 289, and 323-326 (CKKL) contribute to the GTP site. 5-phospho-alpha-D-ribose 1-diphosphate-binding residues include arginine 333 and arginine 358. Arginine 378 is a GTP binding site. 5-phospho-alpha-D-ribose 1-diphosphate-binding positions include aspartate 384, 389 to 392 (TGNS), and glutamate 455. 454–456 (GEF) lines the uracil pocket.

It in the N-terminal section; belongs to the uridine kinase family. This sequence in the C-terminal section; belongs to the UPRTase family. Mg(2+) is required as a cofactor.

It carries out the reaction UMP + diphosphate = 5-phospho-alpha-D-ribose 1-diphosphate + uracil. The enzyme catalyses cytidine + ATP = CMP + ADP + H(+). The catalysed reaction is uridine + ATP = UMP + ADP + H(+). It functions in the pathway pyrimidine metabolism; UMP biosynthesis via salvage pathway; UMP from uracil: step 1/1. It participates in pyrimidine metabolism; CTP biosynthesis via salvage pathway; CTP from cytidine: step 1/3. Its pathway is pyrimidine metabolism; UMP biosynthesis via salvage pathway; UMP from uridine: step 1/1. Allosterically activated by GTP. In terms of biological role, involved in the pyrimidine salvage pathway. The uracil phosphoribosyltransferase (UPRT) activity, that catalyzes the conversion of uracil and 5-phospho-alpha-D-ribose 1-diphosphate (PRPP) to UMP and diphosphate, is unsure. This Arabidopsis thaliana (Mouse-ear cress) protein is Uridine kinase-like protein 3 (UKL3).